We begin with the raw amino-acid sequence, 206 residues long: MINFLALKSSILGDYSSSSKLIDELLAKYTPQQAIITEHDLAEQPLPVLDGEIAMAMRSPEQLNDKQRDALALSDKLISELVASDLLVIAAPMYNFMIPTQLKNWIDLVARAGKTFSYTEQGPQGLISGTRAIIVTTRGGMHKEQGTDQQVPYLKTVLNFMGISDIEVVYAESLAMGPETAELNLEQARKQLSVFTNDISTLNSQS.

Residues serine 10, 16-18 (SSS), 93-96 (MYNF), and 137-140 (TRGG) each bind FMN.

It belongs to the azoreductase type 1 family. As to quaternary structure, homodimer. The cofactor is FMN.

The enzyme catalyses 2 a quinone + NADH + H(+) = 2 a 1,4-benzosemiquinone + NAD(+). It catalyses the reaction N,N-dimethyl-1,4-phenylenediamine + anthranilate + 2 NAD(+) = 2-(4-dimethylaminophenyl)diazenylbenzoate + 2 NADH + 2 H(+). Functionally, quinone reductase that provides resistance to thiol-specific stress caused by electrophilic quinones. Also exhibits azoreductase activity. Catalyzes the reductive cleavage of the azo bond in aromatic azo compounds to the corresponding amines. This chain is FMN-dependent NADH:quinone oxidoreductase, found in Psychromonas ingrahamii (strain DSM 17664 / CCUG 51855 / 37).